The sequence spans 803 residues: Translation initiation factor IF-2 (803 aa).

The segment covering 65–75 (PDKVEEKKEHT) has biased composition (basic and acidic residues). The tract at residues 65-186 (PDKVEEKKEH…PKSRKSKTLK (122 aa)) is disordered. Residues 175-185 (NKPKSRKSKTL) show a composition bias toward basic residues. Residues 300-468 (IRPPVVTIMG…ILLTADAALE (169 aa)) enclose the tr-type G domain. The segment at 309 to 316 (GHVDHGKT) is G1. 309-316 (GHVDHGKT) is a binding site for GTP. Residues 334-338 (GITQH) are G2. A G3 region spans residues 355–358 (DTPG). Residues 355–359 (DTPGH) and 409–412 (NKID) contribute to the GTP site. Residues 409-412 (NKID) form a G4 region. Residues 445-447 (SAK) form a G5 region.

Belongs to the TRAFAC class translation factor GTPase superfamily. Classic translation factor GTPase family. IF-2 subfamily.

It localises to the cytoplasm. In terms of biological role, one of the essential components for the initiation of protein synthesis. Protects formylmethionyl-tRNA from spontaneous hydrolysis and promotes its binding to the 30S ribosomal subunits. Also involved in the hydrolysis of GTP during the formation of the 70S ribosomal complex. The protein is Translation initiation factor IF-2 of Tropheryma whipplei (strain Twist) (Whipple's bacillus).